Here is a 108-residue protein sequence, read N- to C-terminus: MSGPNGDPNISVEDGLINDDDDFGSEEYEAINSMLDQINSYLDDLEERNDSLNGKLHELMESNRQARLEFRAQLSNHTPQEDSADGESKEELGGDAGWENDKKIDEGS.

Disordered stretches follow at residues 1–23 (MSGP…DDDF) and 67–108 (RLEF…DEGS). The stretch at 25–73 (SEEYEAINSMLDQINSYLDDLEERNDSLNGKLHELMESNRQARLEFRAQ) forms a coiled coil. The segment covering 99 to 108 (ENDKKIDEGS) has biased composition (basic and acidic residues).

It belongs to the UPF0184 (EST00098) family.

It localises to the cell junction. The protein localises to the cytoplasm. It is found in the cytoskeleton. Essential for intermediate filament organization in intestinal cells, interacts with intermediate filament and regulates intestinal lumen morphology. The protein is Bublin coiled-coil protein (bbln) of Takifugu rubripes (Japanese pufferfish).